A 464-amino-acid polypeptide reads, in one-letter code: Protein FAM90A24 (464 aa).

3 disordered regions span residues 1–42 (MMAR…DPRL), 69–389 (VPAT…HDGA), and 415–437 (HSPE…SEAP). Composition is skewed to basic and acidic residues over residues 74 to 89 (GKKE…KPRG) and 97 to 114 (NKDK…DPQR). Residues 180–197 (LASLSPLRKASLSSSSSL) are compositionally biased toward low complexity.

It belongs to the FAM90 family.

In Homo sapiens (Human), this protein is Protein FAM90A24.